Here is a 577-residue protein sequence, read N- to C-terminus: MGTAKIPALLWFLLAGLVLALAVNPAHGAKTRHYDFFITETNYTRLCHEKSILTVNGQFPGPTIYARKGDFIIVNVHNNGNKNITIHWHGVDQPRNPWSDGPEFITQCPIRPGGNFTYQVILFEEEGTLWWHAHSDFDRATVHGAIVIHPKRGTTFLFRKLDKEIPWWNDDVEHVLDKAKRIGGDVEPSDTNTINGQPGDMFPLCSRDDTFKVAVQQGNTYLLRVINAGLTNDMFFAIAGHRLTVVGIDARYTKPITVDYIMIAPGQTMDVLLKANRTLGSNSRYYMAARTFITLPVDTIRFNNSTATAIVEYTDSAVARPVGPPEFPVLLPAIKDEDAAMAFVKQLRSLGNQDHPVHVPKQVDEHMLIDIDINFLPCDANNATNKLCEGPQGNRFAASLNNVSFQNPAIDVLDAYYYGSGRGVYEENFPNKLTVIVNPTGDINGGGPLLTKRGTKVKVLEYGTVVEVVFQDLSIENHPMHLHGFTFYVVGRGSGTFDERRDPATYNLIDPPFQNTVSVPKSSWAAIRFRADNPGVWFMHCHFDRHVVWGMDTMFIVKDGKTPQAQMLPRPPNMPEC.

An N-terminal signal peptide occupies residues 1–28 (MGTAKIPALLWFLLAGLVLALAVNPAHG). Plastocyanin-like domains follow at residues 37–153 (FITE…PKRG) and 163–316 (KEIP…YTDS). N-linked (GlcNAc...) asparagine glycosylation is found at N42 and N83. H87 and H89 together coordinate Cu cation. An N-linked (GlcNAc...) asparagine glycan is attached at N115. Residues H132 and H134 each contribute to the Cu cation site. 4 N-linked (GlcNAc...) asparagine glycosylation sites follow: N276, N304, N382, and N402. The Plastocyanin-like 3 domain maps to 442-561 (DINGGGPLLT…DTMFIVKDGK (120 aa)). Cu cation contacts are provided by H478, H481, H483, H540, C541, H542, H546, and M551.

It belongs to the multicopper oxidase family. The cofactor is Cu cation.

The protein resides in the secreted. It localises to the extracellular space. The protein localises to the apoplast. It catalyses the reaction 4 hydroquinone + O2 = 4 benzosemiquinone + 2 H2O. Its function is as follows. Lignin degradation and detoxification of lignin-derived products. The chain is Putative laccase-1 (LAC1) from Oryza sativa subsp. japonica (Rice).